A 184-amino-acid polypeptide reads, in one-letter code: Photosystem I assembly protein Ycf4 (184 aa).

Transmembrane regions (helical) follow at residues 22-42 and 57-77; these read LCWA…GTSS and ILFF…LFIS.

It belongs to the Ycf4 family.

It is found in the plastid. The protein localises to the chloroplast thylakoid membrane. Functionally, seems to be required for the assembly of the photosystem I complex. The polypeptide is Photosystem I assembly protein Ycf4 (Daucus carota (Wild carrot)).